A 284-amino-acid polypeptide reads, in one-letter code: Bifunctional protein FolD (284 aa).

Residues 166-168 (GAS) and Ile232 each bind NADP(+).

It belongs to the tetrahydrofolate dehydrogenase/cyclohydrolase family. In terms of assembly, homodimer.

The enzyme catalyses (6R)-5,10-methylene-5,6,7,8-tetrahydrofolate + NADP(+) = (6R)-5,10-methenyltetrahydrofolate + NADPH. It carries out the reaction (6R)-5,10-methenyltetrahydrofolate + H2O = (6R)-10-formyltetrahydrofolate + H(+). The protein operates within one-carbon metabolism; tetrahydrofolate interconversion. Functionally, catalyzes the oxidation of 5,10-methylenetetrahydrofolate to 5,10-methenyltetrahydrofolate and then the hydrolysis of 5,10-methenyltetrahydrofolate to 10-formyltetrahydrofolate. This chain is Bifunctional protein FolD, found in Pseudoalteromonas translucida (strain TAC 125).